The primary structure comprises 291 residues: Putative heme-binding peroxidase (291 aa).

Residue H61 is the Proton acceptor of the active site. Residue H185 coordinates heme b. Residue W201 is the Tryptophan radical intermediate of the active site.

It belongs to the peroxidase family. Cytochrome c peroxidase subfamily. Heme b is required as a cofactor.

Destroys radicals which are normally produced within the cells and which are toxic to biological systems. The protein is Putative heme-binding peroxidase (CCP2) of Candida albicans (strain SC5314 / ATCC MYA-2876) (Yeast).